A 164-amino-acid chain; its full sequence is Succinate dehydrogenase assembly factor 2, mitochondrial (164 aa).

Belongs to the SDHAF2 family. As to quaternary structure, interacts with the flavoprotein subunit within the SDH catalytic dimer.

It is found in the mitochondrion matrix. Its function is as follows. Plays an essential role in the assembly of succinate dehydrogenase (SDH), an enzyme complex (also referred to as respiratory complex II) that is a component of both the tricarboxylic acid (TCA) cycle and the mitochondrial electron transport chain, and which couples the oxidation of succinate to fumarate with the reduction of ubiquinone (coenzyme Q) to ubiquinol. Required for flavinylation (covalent attachment of FAD) of the flavoprotein subunit of the SDH catalytic dimer. This chain is Succinate dehydrogenase assembly factor 2, mitochondrial, found in Lodderomyces elongisporus (strain ATCC 11503 / CBS 2605 / JCM 1781 / NBRC 1676 / NRRL YB-4239) (Yeast).